Here is a 454-residue protein sequence, read N- to C-terminus: Chromosomal replication initiator protein DnaA (454 aa).

Residues 1 to 79 (MSLCLWKQCL…NSPLIKFEIY (79 aa)) are domain I, interacts with DnaA modulators. A domain II region spans residues 79 to 117 (YQIYKENKLKKNIENNNNNKNEKLIWSNIPKFKNLSYRS). A domain III, AAA+ region region spans residues 118-334 (NINKRYNFQN…GALNRVILNS (217 aa)). Residues G162, G164, K165, and T166 each coordinate ATP. The segment at 335-454 (RFTHRAITVD…FLNLIRTLSK (120 aa)) is domain IV, binds dsDNA.

The protein belongs to the DnaA family. As to quaternary structure, oligomerizes as a right-handed, spiral filament on DNA at oriC.

Its subcellular location is the cytoplasm. Plays an essential role in the initiation and regulation of chromosomal replication. ATP-DnaA binds to the origin of replication (oriC) to initiate formation of the DNA replication initiation complex once per cell cycle. Binds the DnaA box (a 9 base pair repeat at the origin) and separates the double-stranded (ds)DNA. Forms a right-handed helical filament on oriC DNA; dsDNA binds to the exterior of the filament while single-stranded (ss)DNA is stabiized in the filament's interior. The ATP-DnaA-oriC complex binds and stabilizes one strand of the AT-rich DNA unwinding element (DUE), permitting loading of DNA polymerase. After initiation quickly degrades to an ADP-DnaA complex that is not apt for DNA replication. Binds acidic phospholipids. This chain is Chromosomal replication initiator protein DnaA, found in Buchnera aphidicola subsp. Acyrthosiphon pisum (strain 5A).